The chain runs to 182 residues: ATP synthase subunit delta (182 aa).

Belongs to the ATPase delta chain family. F-type ATPases have 2 components, F(1) - the catalytic core - and F(0) - the membrane proton channel. F(1) has five subunits: alpha(3), beta(3), gamma(1), delta(1), epsilon(1). F(0) has three main subunits: a(1), b(2) and c(10-14). The alpha and beta chains form an alternating ring which encloses part of the gamma chain. F(1) is attached to F(0) by a central stalk formed by the gamma and epsilon chains, while a peripheral stalk is formed by the delta and b chains.

Its subcellular location is the cell membrane. Its activity is regulated as follows. Increases 2-fold following exposure to low pH. Its function is as follows. F(1)F(0) ATP synthase produces ATP from ADP in the presence of a proton or sodium gradient. F-type ATPases consist of two structural domains, F(1) containing the extramembraneous catalytic core and F(0) containing the membrane proton channel, linked together by a central stalk and a peripheral stalk. During catalysis, ATP synthesis in the catalytic domain of F(1) is coupled via a rotary mechanism of the central stalk subunits to proton translocation. In terms of biological role, this protein is part of the stalk that links CF(0) to CF(1). It either transmits conformational changes from CF(0) to CF(1) or is implicated in proton conduction. The sequence is that of ATP synthase subunit delta from Lactobacillus acidophilus (strain ATCC 700396 / NCK56 / N2 / NCFM).